A 462-amino-acid polypeptide reads, in one-letter code: Glycine--tRNA ligase (462 aa).

The substrate site is built by Arg-99 and Glu-174. Residues 206–208 (RNE), 216–221 (FRTREF), 290–291 (EL), and 334–337 (GADR) contribute to the ATP site. A substrate-binding site is contributed by 221–225 (FEQME). Residue 330–334 (EPSLG) participates in substrate binding.

It belongs to the class-II aminoacyl-tRNA synthetase family. In terms of assembly, homodimer.

Its subcellular location is the cytoplasm. It carries out the reaction tRNA(Gly) + glycine + ATP = glycyl-tRNA(Gly) + AMP + diphosphate. Catalyzes the attachment of glycine to tRNA(Gly). This chain is Glycine--tRNA ligase, found in Macrococcus caseolyticus (strain JCSC5402) (Macrococcoides caseolyticum).